The sequence spans 91 residues: Apolipoprotein C-III (91 aa).

An N-terminal signal peptide occupies residues 1 to 20 (MQPRVLLAVTLLALLVSARA). Met-63 is subject to Methionine sulfoxide. The interval 68 to 91 (DSMKGYWTSLIGRLSGFLDSTPSS) is lipid-binding.

Belongs to the apolipoprotein C3 family.

Its subcellular location is the secreted. Its function is as follows. Component of triglyceride-rich very low density lipoproteins (VLDL) and high density lipoproteins (HDL) in plasma. Plays a multifaceted role in triglyceride homeostasis. Intracellularly, promotes hepatic very low density lipoprotein 1 (VLDL1) assembly and secretion; extracellularly, attenuates hydrolysis and clearance of triglyceride-rich lipoproteins (TRLs). Impairs the lipolysis of TRLs by inhibiting lipoprotein lipase and the hepatic uptake of TRLs by remnant receptors. Formed of several curved helices connected via semiflexible hinges, so that it can wrap tightly around the curved micelle surface and easily adapt to the different diameters of its natural binding partners. This chain is Apolipoprotein C-III (APOC3), found in Cavia porcellus (Guinea pig).